Here is a 360-residue protein sequence, read N- to C-terminus: NAD(P)H-quinone oxidoreductase subunit 1, chloroplastic (360 aa).

A run of 9 helical transmembrane segments spans residues 27–47 (IWIFVPIFSLVLGIITGVLVI), 98–118 (FSIGPSIAVISILLSYSVIPF), 129–149 (IGIFLWIAISSIAPIGLLMSG), 165–185 (AAQSISYEIPLTLCVLSISLL), 203–223 (FWGWNLWRQPIGFIIFLISSL), 248–268 (YSGIKFGLFYVASYLNLLISS), 269–289 (LFVTVLYLGGWNISIPYISIL), 297–317 (IFGTTIGIFITLAKTYLFLFI), and 340–360 (FLLPISLGNLLLTTSFQLFSL).

Belongs to the complex I subunit 1 family. In terms of assembly, NDH is composed of at least 16 different subunits, 5 of which are encoded in the nucleus.

The protein localises to the plastid. Its subcellular location is the chloroplast thylakoid membrane. The catalysed reaction is a plastoquinone + NADH + (n+1) H(+)(in) = a plastoquinol + NAD(+) + n H(+)(out). It catalyses the reaction a plastoquinone + NADPH + (n+1) H(+)(in) = a plastoquinol + NADP(+) + n H(+)(out). In terms of biological role, NDH shuttles electrons from NAD(P)H:plastoquinone, via FMN and iron-sulfur (Fe-S) centers, to quinones in the photosynthetic chain and possibly in a chloroplast respiratory chain. The immediate electron acceptor for the enzyme in this species is believed to be plastoquinone. Couples the redox reaction to proton translocation, and thus conserves the redox energy in a proton gradient. This Nasturtium officinale (Watercress) protein is NAD(P)H-quinone oxidoreductase subunit 1, chloroplastic.